Consider the following 151-residue polypeptide: Lipoprotein signal peptidase (151 aa).

Helical transmembrane passes span 61–81 and 88–107; these read GSQW…IWIG and SRWQ…GNGI. Active-site residues include D117 and D133. Residues 128 to 148 traverse the membrane as a helical segment; sequence VFNLADVAINLAVLCLLIEAI.

It belongs to the peptidase A8 family.

Its subcellular location is the cell inner membrane. The catalysed reaction is Release of signal peptides from bacterial membrane prolipoproteins. Hydrolyzes -Xaa-Yaa-Zaa-|-(S,diacylglyceryl)Cys-, in which Xaa is hydrophobic (preferably Leu), and Yaa (Ala or Ser) and Zaa (Gly or Ala) have small, neutral side chains.. It functions in the pathway protein modification; lipoprotein biosynthesis (signal peptide cleavage). Its function is as follows. This protein specifically catalyzes the removal of signal peptides from prolipoproteins. The polypeptide is Lipoprotein signal peptidase (Synechococcus sp. (strain RCC307)).